A 1293-amino-acid chain; its full sequence is Enterobactin synthase component F (1293 aa).

Residues 1 to 301 are elongation/condensation; that stretch reads MSQHLPLVAA…NVLPLGIHIA (301 aa). The adenylation stretch occupies residues 482–887; sequence SYREMREQVV…ALPDVEQAVT (406 aa). Residues 971-1046 enclose the Carrier domain; that stretch reads APKAGSETII…KLATIIDGEE (76 aa). S1006 carries the post-translational modification O-(pantetheine 4'-phosphoryl)serine. Residues 1066 to 1293 are thioesterase; that stretch reads PTLFCFHPAS…GPIIRATLNR (228 aa). The Proton acceptor; for thioesterase activity role is filled by H1271.

It belongs to the ATP-dependent AMP-binding enzyme family. EntF subfamily. In terms of assembly, proteins EntB, EntD, EntE and EntF are the component of the enterobactin synthase. Components probably do not form a stable complex. EntF acts as a catalytic monomer. Requires pantetheine 4'-phosphate as cofactor. 4'-phosphopantetheine is transferred from CoA to a specific serine of apo-EntF by EntD. Holo-EntF so formed is then acylated with seryl-AMP.

Its subcellular location is the cytoplasm. The enzyme catalyses 3 2,3-dihydroxybenzoate + 3 L-serine + 6 ATP = enterobactin + 6 AMP + 6 diphosphate + 4 H(+). It catalyses the reaction holo-[peptidyl-carrier protein] + L-serine + ATP = L-seryl-[peptidyl-carrier protein] + AMP + diphosphate. It participates in siderophore biosynthesis; enterobactin biosynthesis. Its function is as follows. Involved in the biosynthesis of the siderophore enterobactin (enterochelin), which is a macrocyclic trimeric lactone of N-(2,3-dihydroxybenzoyl)-serine. EntF catalyzes the activation of L-serine via ATP-dependent PPi exchange reaction to form seryladenylate. Activated L-serine is loaded onto the peptidyl carrier domain via a thioester linkage to the phosphopanthetheine moiety, forming seryl-S-Ppant-EntF. EntF acts then as the sole catalyst for the formation of the three amide and three ester linkages found in enterobactin, using seryladenylate and 2,3-dihydroxybenzoate-S-Ppant-EntB (DHB-S-Ppant-EntB) as substrates, via the formation of a DHB-Ser-S-Ppant-EntF intermediate. This chain is Enterobactin synthase component F (entF), found in Escherichia coli O157:H7.